The sequence spans 541 residues: Apolipoprotein N-acyltransferase (541 aa).

Helical transmembrane passes span 21–41, 54–74, 89–109, 116–136, 157–177, and 189–209; these read MSWF…WYSL, LTSL…SWML, VLIS…FFIV, ILWC…YFLC, FGGF…GISF, and YVWL…YEYL. In terms of domain architecture, CN hydrolase spans 219–500; that stretch reads LRVAVIQPAS…PGVLQVSLPM (282 aa). Catalysis depends on glutamate 265, which acts as the Proton acceptor. Residue lysine 350 is part of the active site. Cysteine 405 serves as the catalytic Nucleophile. A helical transmembrane segment spans residues 506-526; the sequence is LYAFWGDFPMIFLSLLSIGCI.

Belongs to the CN hydrolase family. Apolipoprotein N-acyltransferase subfamily.

It is found in the cell inner membrane. It catalyses the reaction N-terminal S-1,2-diacyl-sn-glyceryl-L-cysteinyl-[lipoprotein] + a glycerophospholipid = N-acyl-S-1,2-diacyl-sn-glyceryl-L-cysteinyl-[lipoprotein] + a 2-acyl-sn-glycero-3-phospholipid + H(+). It functions in the pathway protein modification; lipoprotein biosynthesis (N-acyl transfer). Its function is as follows. Catalyzes the phospholipid dependent N-acylation of the N-terminal cysteine of apolipoprotein, the last step in lipoprotein maturation. This chain is Apolipoprotein N-acyltransferase, found in Chlamydia caviae (strain ATCC VR-813 / DSM 19441 / 03DC25 / GPIC) (Chlamydophila caviae).